A 217-amino-acid polypeptide reads, in one-letter code: MRLRKKWWARPEIEASDKFAEEPKELRGKWNKEFNNNNDIHLELGCGRGGFISQLVEKNKDINYVGIDLKDEVIVYAIRKVKEKEEEVKREFKNIKFVTMNIMGIAEVFDKNEISKIYINFCNPWPKERHNKRRLTHTKLLTEYKKFLKPNTEIWFKTDDKELFEDSQEYFKESGFNIEYITYDLHNSDFKENIKTEYETKFETMGMKIMFLKARLL.

S-adenosyl-L-methionine-binding residues include glutamate 43, aspartate 68, asparagine 101, and asparagine 123. Substrate is bound at residue lysine 127. Residues 129 to 134 (RHNKRR) form an interaction with RNA region. Substrate contacts are provided by residues aspartate 159 and 196-199 (TEYE).

Belongs to the class I-like SAM-binding methyltransferase superfamily. TrmB family.

The catalysed reaction is guanosine(46) in tRNA + S-adenosyl-L-methionine = N(7)-methylguanosine(46) in tRNA + S-adenosyl-L-homocysteine. It participates in tRNA modification; N(7)-methylguanine-tRNA biosynthesis. Functionally, catalyzes the formation of N(7)-methylguanine at position 46 (m7G46) in tRNA. This chain is tRNA (guanine-N(7)-)-methyltransferase, found in Clostridium botulinum (strain Langeland / NCTC 10281 / Type F).